Consider the following 495-residue polypeptide: tRNA(Ile)-lysidine synthase (495 aa).

26 to 31 is an ATP binding site; that stretch reads SGGSDS.

The protein belongs to the tRNA(Ile)-lysidine synthase family.

Its subcellular location is the cytoplasm. It catalyses the reaction cytidine(34) in tRNA(Ile2) + L-lysine + ATP = lysidine(34) in tRNA(Ile2) + AMP + diphosphate + H(+). Its function is as follows. Ligates lysine onto the cytidine present at position 34 of the AUA codon-specific tRNA(Ile) that contains the anticodon CAU, in an ATP-dependent manner. Cytidine is converted to lysidine, thus changing the amino acid specificity of the tRNA from methionine to isoleucine. This Bartonella tribocorum (strain CIP 105476 / IBS 506) protein is tRNA(Ile)-lysidine synthase.